Reading from the N-terminus, the 456-residue chain is Dolichyl-diphosphooligosaccharide--protein glycosyltransferase 48 kDa subunit (456 aa).

The first 42 residues, 1–42 (MGYFRCARAGSFGRRRKMEPSTAARAWALFWLLLPLLGAVCA), serve as a signal peptide directing secretion. Over 43 to 427 (SGPRTLVLLD…YERFIPSAYP (385 aa)) the chain is Lumenal. Residues 428 to 447 (YYASAFSMMLGLFIFSIVFL) traverse the membrane as a helical segment. At 448–456 (HMKEKEKSD) the chain is on the cytoplasmic side.

The protein belongs to the DDOST 48 kDa subunit family. In terms of assembly, component of the oligosaccharyltransferase (OST) complex. OST exists in two different complex forms which contain common core subunits RPN1, RPN2, OST48, OST4, DAD1 and TMEM258, either STT3A or STT3B as catalytic subunits, and form-specific accessory subunits. STT3A complex assembly occurs through the formation of 3 subcomplexes. Subcomplex 1 contains RPN1 and TMEM258, subcomplex 2 contains the STT3A-specific subunits STT3A, DC2/OSTC, and KCP2 as well as the core subunit OST4, and subcomplex 3 contains RPN2, DAD1, and OST48. The STT3A complex can form stable complexes with the Sec61 complex or with both the Sec61 and TRAP complexes. Interacts with SMIM22.

The protein resides in the endoplasmic reticulum membrane. The protein operates within protein modification; protein glycosylation. Subunit of the oligosaccharyl transferase (OST) complex that catalyzes the initial transfer of a defined glycan (Glc(3)Man(9)GlcNAc(2) in eukaryotes) from the lipid carrier dolichol-pyrophosphate to an asparagine residue within an Asn-X-Ser/Thr consensus motif in nascent polypeptide chains, the first step in protein N-glycosylation. N-glycosylation occurs cotranslationally and the complex associates with the Sec61 complex at the channel-forming translocon complex that mediates protein translocation across the endoplasmic reticulum (ER). All subunits are required for a maximal enzyme activity. Required for the assembly of both SST3A- and SS3B-containing OST complexes. The chain is Dolichyl-diphosphooligosaccharide--protein glycosyltransferase 48 kDa subunit from Homo sapiens (Human).